Consider the following 130-residue polypeptide: Small ribosomal subunit protein uS9 (130 aa).

The protein belongs to the universal ribosomal protein uS9 family.

The chain is Small ribosomal subunit protein uS9 from Cupriavidus necator (strain ATCC 17699 / DSM 428 / KCTC 22496 / NCIMB 10442 / H16 / Stanier 337) (Ralstonia eutropha).